The sequence spans 294 residues: ATP synthase gamma chain (294 aa).

This sequence belongs to the ATPase gamma chain family. In terms of assembly, F-type ATPases have 2 components, CF(1) - the catalytic core - and CF(0) - the membrane proton channel. CF(1) has five subunits: alpha(3), beta(3), gamma(1), delta(1), epsilon(1). CF(0) has three main subunits: a, b and c.

The protein resides in the cell inner membrane. Functionally, produces ATP from ADP in the presence of a proton gradient across the membrane. The gamma chain is believed to be important in regulating ATPase activity and the flow of protons through the CF(0) complex. This chain is ATP synthase gamma chain, found in Campylobacter jejuni subsp. jejuni serotype O:23/36 (strain 81-176).